The following is a 112-amino-acid chain: UPF0329 protein ECU11_0080 (112 aa).

This sequence belongs to the UPF0329 family.

This Encephalitozoon cuniculi (strain GB-M1) (Microsporidian parasite) protein is UPF0329 protein ECU11_0080.